We begin with the raw amino-acid sequence, 305 residues long: 2-aminophenol 1,6-dioxygenase beta subunit (305 aa).

H14, H63, and H196 together coordinate Fe cation.

The protein belongs to the LigB/MhpB extradiol dioxygenase family. In terms of assembly, heterotetramer of 2 alpha and 2 beta subunits. Requires Fe(2+) as cofactor.

The enzyme catalyses 2-aminophenol + O2 = 2-aminomuconate 6-semialdehyde. Strongly inhibited by CuSO(4), FeCl(3), K(3)[Fe(CN)(6)], AgNO3, HgCl(2) and MnCl(2). Its function is as follows. Component of the 2-aminophenol 1,6-dioxygenase complex that catalyzes the ring fission of 2-aminophenol to produce 2-aminomuconic 6-semialdehyde. AmnB seems to be the catalytic subunit of the complex. The enzyme is also active toward 2-amino-p-cresol, 6-amino-m-cresol, 2-amino-m-cresol, 2-amino-4,5-dimethylphenol, 2-amino-4-chlorophenol, and catechol. The protein is 2-aminophenol 1,6-dioxygenase beta subunit (amnB) of Pseudomonas sp.